The primary structure comprises 129 residues: uncharacterized protein (129 aa).

Residues 33-50 (MGGNVMWFIALLFALLIA) form a helical membrane-spanning segment.

It is found in the membrane. This is an uncharacterized protein from Saccharomyces cerevisiae (strain ATCC 204508 / S288c) (Baker's yeast).